Reading from the N-terminus, the 345-residue chain is 3-dehydroquinate synthase (345 aa).

NAD(+) is bound by residues 62–67 (DGEEYK), 96–100 (GVISD), 120–121 (TT), Lys-133, Lys-142, and 160–163 (FLKT). The Zn(2+) site is built by Glu-175, His-233, and His-250.

This sequence belongs to the sugar phosphate cyclases superfamily. Dehydroquinate synthase family. Co(2+) is required as a cofactor. It depends on Zn(2+) as a cofactor. The cofactor is NAD(+).

It is found in the cytoplasm. It catalyses the reaction 7-phospho-2-dehydro-3-deoxy-D-arabino-heptonate = 3-dehydroquinate + phosphate. It participates in metabolic intermediate biosynthesis; chorismate biosynthesis; chorismate from D-erythrose 4-phosphate and phosphoenolpyruvate: step 2/7. In terms of biological role, catalyzes the conversion of 3-deoxy-D-arabino-heptulosonate 7-phosphate (DAHP) to dehydroquinate (DHQ). This chain is 3-dehydroquinate synthase, found in Campylobacter concisus (strain 13826).